Consider the following 447-residue polypeptide: Cysteine--tRNA ligase (447 aa).

Cys28 provides a ligand contact to Zn(2+). A 'HIGH' region motif is present at residues Pro30–Asn40. Residues Cys211, His236, and Glu240 each contribute to the Zn(2+) site. Residues Lys268 to Ser272 carry the 'KMSKS' region motif. An ATP-binding site is contributed by Lys271.

The protein belongs to the class-I aminoacyl-tRNA synthetase family. In terms of assembly, monomer. Requires Zn(2+) as cofactor.

Its subcellular location is the cytoplasm. It carries out the reaction tRNA(Cys) + L-cysteine + ATP = L-cysteinyl-tRNA(Cys) + AMP + diphosphate. The protein is Cysteine--tRNA ligase of Streptococcus pyogenes serotype M18 (strain MGAS8232).